The following is a 367-amino-acid chain: Probable protein phosphatase 2C 57 (367 aa).

Residues 1–29 form a disordered region; that stretch reads MEEHRLGGGGGGGGGGGRPPIPGAAGRKL. Positions 7–18 are enriched in gly residues; that stretch reads GGGGGGGGGGGR. Residues 67–331 form the PPM-type phosphatase domain; that stretch reads RSGGWADIGS…DNLSVVVICF (265 aa). Mn(2+) contacts are provided by Asp-111, Gly-112, Asp-279, and Asp-322.

It belongs to the PP2C family. Requires Mg(2+) as cofactor. The cofactor is Mn(2+).

The catalysed reaction is O-phospho-L-seryl-[protein] + H2O = L-seryl-[protein] + phosphate. The enzyme catalyses O-phospho-L-threonyl-[protein] + H2O = L-threonyl-[protein] + phosphate. This chain is Probable protein phosphatase 2C 57, found in Oryza sativa subsp. japonica (Rice).